The primary structure comprises 889 residues: MKLSILFLFAIAVQAAFLGIDYGQQSIKAMVVSPKAMMEIVLTPEAKRKDTSGICIRNVNGVLERHYGNSIGSLVTRFPQNTAMHLRSLLGKSMNDKDTIESYLRENPGANLTSTTRNTIAITIDGVEYPVEQLVAMNLQEIIDRANQHIKETDTTGIDFVEQVGIAIPEQFNQAQRQALLDALALTSVKDEAVLVSDGLSVAIDYALKRPDLEINVPQYYIVFDVGTSAAKATLFSLTQPEDLSSPIKIEIGAFDSEATVGGSKFIAAIADIVEDKFLEKNTKITRKSLVENPRARAKIIQAAEKAKLVLSANNEAIISIESLVDDIDFRTTIARSEFQDIFEDNKHTVVKAIKGAIGNQLWDDNISLEDISGVILSGGSSRVPMVQEEIAKLVGEEKILKNVNADETVINGATLKGLKYFGSFKTKPLDITERSLFDYSVEMSGESSSKTVFEKGTKFPNESSILYKAPKKFGKELKFDLFESDTRILSNIVDTTVSSKNWTSACKKGQLYLNVTFDLDSNRVFKIKDITVLCDSDGNAKEEEFEFIDVINDVTKATDVMPLSNAEIRQLSNAITSWNRKDRERKRVQESLNVLEAELYDCRSFIEEFEEKLGEEEFETLKSFTAFVKEKLEYLEDNSADMSKKDIEKLVRETRSQRDTLSRFYNSLDAALGSKDFQKLVDTASKSIKKYKEIESKNLADLENKAEKFNVIGLNVTEKYNSILSKMSFSSIRRSSEENIKTLAGLIDEVNESIKSKAIDDESLENLIKTKLAFEELINTLDLENRQWTYQHQLVMKELKKMYNKKMKAIKKQEKQNENEENGDDEGDDEDETKTKKYLKEATSSGDSSTIKEEDSTGSNEAGNKGDEEDEEEEEDDSSAGNVFDDEL.

The N-terminal stretch at 1–15 (MKLSILFLFAIAVQA) is a signal peptide. 7 N-linked (GlcNAc...) asparagine glycosylation sites follow: N111, N366, N462, N502, N515, N716, and N752. Residues 811–889 (IKKQEKQNEN…SAGNVFDDEL (79 aa)) are disordered. Acidic residues-rich tracts occupy residues 820-833 (NEEN…DEDE) and 868-889 (DEED…DDEL). The short motif at 886–889 (DDEL) is the Prevents secretion from ER element.

The protein belongs to the heat shock protein 70 family.

It localises to the endoplasmic reticulum lumen. The enzyme catalyses ATP + H2O = ADP + phosphate + H(+). Functionally, chaperone required for protein translocation and folding in the endoplasmic reticulum. The chain is Heat shock protein 70 homolog LHS1 (LHS1) from Candida glabrata (strain ATCC 2001 / BCRC 20586 / JCM 3761 / NBRC 0622 / NRRL Y-65 / CBS 138) (Yeast).